We begin with the raw amino-acid sequence, 795 residues long: Probable alpha,alpha-trehalose-phosphate synthase [UDP-forming] 4 (795 aa).

The interval 4-469 is glycosyltransferase; that stretch reads PRLLVVSMSL…WADDFMKLTL (466 aa).

In the N-terminal section; belongs to the glycosyltransferase 20 family. The protein in the C-terminal section; belongs to the trehalose phosphatase family.

It catalyses the reaction D-glucose 6-phosphate + UDP-alpha-D-glucose = alpha,alpha-trehalose 6-phosphate + UDP + H(+). The chain is Probable alpha,alpha-trehalose-phosphate synthase [UDP-forming] 4 (TPS4) from Arabidopsis thaliana (Mouse-ear cress).